The chain runs to 151 residues: MAARREPSSDDESYEVLDLTDYARRHHWWNRLFGRNSGPLTEKYSVATQIVIGGVSGWCAGFLFQKVGKLAATAVGGGFLLLQIASHGGYIQVDWKRVEKDVNNAKRKIKKEANKSAPEINTLIEESTDFVKKNIVVSGGFVGGFLLGLAS.

The short motif at 14–17 (YEVL) is the YXXL element. 3 consecutive transmembrane segments (helical) span residues 44 to 64 (YSVA…GFLF), 71 to 91 (AATA…GGYI), and 130 to 150 (FVKK…LGLA).

This sequence belongs to the FUN14 family.

It is found in the mitochondrion outer membrane. Acts as an activator of hypoxia-induced mitophagy, an important mechanism for mitochondrial quality control. This is FUN14 domain-containing protein 1A (fundc1-a) from Xenopus laevis (African clawed frog).